The following is a 152-amino-acid chain: Transcriptional regulator MraZ (152 aa).

SpoVT-AbrB domains lie at 5-52 (ASAI…PIHE) and 81-124 (AHEV…DEQS).

Belongs to the MraZ family. In terms of assembly, forms oligomers.

It localises to the cytoplasm. It is found in the nucleoid. This chain is Transcriptional regulator MraZ, found in Shewanella baltica (strain OS155 / ATCC BAA-1091).